A 122-amino-acid chain; its full sequence is MIQMQTKLKVADNSGGVKAMCIKVLGGSKRRYANIGDVIKVSIKEAASRGKVKKGDVYDAVVVRTAHGVRRSDGSCIRFDNNAIVLLNTKLEPIGTRIFGPVTRELRSAQFMKIVSLAPEVL.

Belongs to the universal ribosomal protein uL14 family. In terms of assembly, part of the 50S ribosomal subunit. Forms a cluster with proteins L3 and L19. In the 70S ribosome, L14 and L19 interact and together make contacts with the 16S rRNA in bridges B5 and B8.

Its function is as follows. Binds to 23S rRNA. Forms part of two intersubunit bridges in the 70S ribosome. This Ruthia magnifica subsp. Calyptogena magnifica protein is Large ribosomal subunit protein uL14.